A 118-amino-acid chain; its full sequence is Large ribosomal subunit protein bL20 (118 aa).

Belongs to the bacterial ribosomal protein bL20 family.

Its function is as follows. Binds directly to 23S ribosomal RNA and is necessary for the in vitro assembly process of the 50S ribosomal subunit. It is not involved in the protein synthesizing functions of that subunit. This Leptothrix cholodnii (strain ATCC 51168 / LMG 8142 / SP-6) (Leptothrix discophora (strain SP-6)) protein is Large ribosomal subunit protein bL20.